Here is a 300-residue protein sequence, read N- to C-terminus: Putative lysophosphatidic acid:oleoyl-CoA acyltransferase (300 aa).

Residues 32-52 (WILIVVVMILRVPLCIISVTL) form a helical membrane-spanning segment. The HXXXXD motif motif lies at 115–120 (HSSPLD).

It belongs to the 1-acyl-sn-glycerol-3-phosphate acyltransferase family.

The protein resides in the lipid droplet. Its subcellular location is the endoplasmic reticulum membrane. It localises to the golgi apparatus membrane. The enzyme catalyses a 1-acyl-sn-glycero-3-phosphate + an acyl-CoA = a 1,2-diacyl-sn-glycero-3-phosphate + CoA. Functionally, acyl-CoA-dependent lysophosphatidic acid acyltransferase with preference for oleoyl-CoA. Involved in triacylglyceride homeostasis and lipid droplet formation. Involved in vacuolar protein sorting. This chain is Putative lysophosphatidic acid:oleoyl-CoA acyltransferase (vps66), found in Schizosaccharomyces pombe (strain 972 / ATCC 24843) (Fission yeast).